Consider the following 335-residue polypeptide: Nucleoid-associated protein SeAg_B2375 (335 aa).

This sequence belongs to the YejK family.

The protein resides in the cytoplasm. It localises to the nucleoid. The chain is Nucleoid-associated protein SeAg_B2375 from Salmonella agona (strain SL483).